A 79-amino-acid chain; its full sequence is Acyl carrier protein (79 aa).

The 76-residue stretch at 2–77 (SDIEARVKKI…NAIDYANTHH (76 aa)) folds into the Carrier domain. Residue S37 is modified to O-(pantetheine 4'-phosphoryl)serine.

Belongs to the acyl carrier protein (ACP) family. 4'-phosphopantetheine is transferred from CoA to a specific serine of apo-ACP by AcpS. This modification is essential for activity because fatty acids are bound in thioester linkage to the sulfhydryl of the prosthetic group.

It is found in the cytoplasm. It participates in lipid metabolism; fatty acid biosynthesis. Carrier of the growing fatty acid chain in fatty acid biosynthesis. The polypeptide is Acyl carrier protein (Polaromonas naphthalenivorans (strain CJ2)).